A 244-amino-acid polypeptide reads, in one-letter code: Derlin-2.1 (244 aa).

Residues 1–21 (MAQAVEEWYKQMPIITRSYLT) lie on the Cytoplasmic side of the membrane. The helical transmembrane segment at 22–42 (AAVVTTVGCSLEIISPYNLYL) threads the bilayer. The Lumenal segment spans residues 43-96 (NPTLVVKQYQFWRLVTNFLYFRKMDLDFLFHMFFLARYCKLLEENSFRGKTADF). Residues 97–117 (LYMLLFGATVLTGIVLIGGMI) traverse the membrane as a helical segment. Over 118 to 121 (PYLS) the chain is Cytoplasmic. Residues 122–142 (VSFSKIIFLSNSLTFMMVYVW) form a helical membrane-spanning segment. Residues 143-152 (SKQNPYIHMS) are Lumenal-facing. The helical transmembrane segment at 153–173 (FLGLFTFTAAYLPWVLLGFSI) threads the bilayer. Over 174–244 (LVGASAWGDF…HAPFDEIHQD (71 aa)) the chain is Cytoplasmic.

This sequence belongs to the derlin family.

The protein resides in the endoplasmic reticulum membrane. Functionally, may be involved in the degradation process of specific misfolded endoplasmic reticulum (ER) luminal proteins. In Arabidopsis thaliana (Mouse-ear cress), this protein is Derlin-2.1 (DER2.1).